The following is a 197-amino-acid chain: Peptide deformylase (197 aa).

Residues Cys106 and His148 each contribute to the Fe cation site. Glu149 is an active-site residue. His152 provides a ligand contact to Fe cation.

This sequence belongs to the polypeptide deformylase family. Fe(2+) is required as a cofactor.

The catalysed reaction is N-terminal N-formyl-L-methionyl-[peptide] + H2O = N-terminal L-methionyl-[peptide] + formate. Removes the formyl group from the N-terminal Met of newly synthesized proteins. Requires at least a dipeptide for an efficient rate of reaction. N-terminal L-methionine is a prerequisite for activity but the enzyme has broad specificity at other positions. This Mycolicibacterium smegmatis (strain ATCC 700084 / mc(2)155) (Mycobacterium smegmatis) protein is Peptide deformylase.